A 304-amino-acid polypeptide reads, in one-letter code: Ribonuclease Z (304 aa).

Positions 63, 65, 67, 68, 143, 213, and 271 each coordinate Zn(2+). Asp-67 serves as the catalytic Proton acceptor.

It belongs to the RNase Z family. Homodimer. Zn(2+) is required as a cofactor.

It catalyses the reaction Endonucleolytic cleavage of RNA, removing extra 3' nucleotides from tRNA precursor, generating 3' termini of tRNAs. A 3'-hydroxy group is left at the tRNA terminus and a 5'-phosphoryl group is left at the trailer molecule.. Zinc phosphodiesterase, which displays some tRNA 3'-processing endonuclease activity. Probably involved in tRNA maturation, by removing a 3'-trailer from precursor tRNA. The sequence is that of Ribonuclease Z from Bacteroides fragilis (strain YCH46).